The sequence spans 210 residues: Rho-related GTP-binding protein RhoD (210 aa).

24–31 (GDGGCGKT) serves as a coordination point for GTP. An Effector region motif is present at residues 46-54 (YTPTVFERY). GTP is bound by residues 71–75 (DTAGQ) and 129–132 (CKTD). At C207 the chain carries Cysteine methyl ester. Residue C207 is the site of S-geranylgeranyl cysteine attachment. A propeptide spans 208 to 210 (VVT) (removed in mature form).

It belongs to the small GTPase superfamily. Rho family. In terms of assembly, interacts (in GTP-bound form) with DIAPH2 isoform 3, DAPK3, FILIP1 and WHAMM. Interacts with PAK5. Interacts (independent of GTP-loaded status) with ANKFY1. Heart, placenta, liver, skeletal muscle, and pancreas and, with weaker intensity, in several other tissues.

It is found in the cell membrane. It localises to the early endosome. Functionally, involved in endosome dynamics. May coordinate membrane transport with the function of the cytoskeleton. Involved in the internalization and trafficking of activated tyrosine kinase receptors such as PDGFRB. Participates in the reorganization of actin cytoskeleton; the function seems to involve WHAMM and includes regulation of filopodia formation and actin filament bundling. Can modulate the effect of DAPK3 in reorganization of actin cytoskeleton and focal adhesion dissolution. In Homo sapiens (Human), this protein is Rho-related GTP-binding protein RhoD.